Reading from the N-terminus, the 796-residue chain is Protein translocase subunit SecA 2 (796 aa).

Residues Gln-84, 102–106, and Asp-496 each bind ATP; that span reads GEGKT.

Belongs to the SecA family. Monomer and homodimer. Part of the essential Sec protein translocation apparatus which comprises SecA, SecYEG and auxiliary proteins SecDF. Other proteins may also be involved.

The protein resides in the cell membrane. It localises to the cytoplasm. The enzyme catalyses ATP + H2O + cellular proteinSide 1 = ADP + phosphate + cellular proteinSide 2.. Functionally, part of the Sec protein translocase complex. Interacts with the SecYEG preprotein conducting channel. Has a central role in coupling the hydrolysis of ATP to the transfer of proteins into and across the cell membrane, serving as an ATP-driven molecular motor driving the stepwise translocation of polypeptide chains across the membrane. This chain is Protein translocase subunit SecA 2, found in Staphylococcus haemolyticus (strain JCSC1435).